We begin with the raw amino-acid sequence, 227 residues long: Uracil-DNA glycosylase (227 aa).

Asp-64 functions as the Proton acceptor in the catalytic mechanism.

This sequence belongs to the uracil-DNA glycosylase (UDG) superfamily. UNG family.

Its subcellular location is the cytoplasm. The catalysed reaction is Hydrolyzes single-stranded DNA or mismatched double-stranded DNA and polynucleotides, releasing free uracil.. Functionally, excises uracil residues from the DNA which can arise as a result of misincorporation of dUMP residues by DNA polymerase or due to deamination of cytosine. The chain is Uracil-DNA glycosylase from Serratia proteamaculans (strain 568).